A 197-amino-acid chain; its full sequence is tRNA(Phe) 7-((3-amino-3-carboxypropyl)-4-demethylwyosine(37)-N(4))-methyltransferase (197 aa).

The protein belongs to the TYW3 family.

The enzyme catalyses 4-demethyl-7-[(3S)-3-amino-3-carboxypropyl]wyosine(37) in tRNA(Phe) + S-adenosyl-L-methionine = 7-[(3S)-3-amino-3-carboxypropyl]wyosine(37) in tRNA(Phe) + S-adenosyl-L-homocysteine + H(+). In terms of biological role, S-adenosyl-L-methionine-dependent methyltransferase that acts as a component of the wyosine derivatives biosynthesis pathway. Probably methylates N-4 position of wybutosine-86 to produce wybutosine-72. The chain is tRNA(Phe) 7-((3-amino-3-carboxypropyl)-4-demethylwyosine(37)-N(4))-methyltransferase from Thermococcus sibiricus (strain DSM 12597 / MM 739).